Consider the following 527-residue polypeptide: ARS-binding protein 2 (527 aa).

3 disordered regions span residues 160-184, 219-265, and 282-344; these read PDVN…HSAS, SHHM…NSHN, and IDPD…IKRL. The span at 164–177 shows a compositional bias: low complexity; that stretch reads SSSISTMRTSTSPS. Polar residues predominate over residues 225 to 239; it reads RGSQQAHQTTPQNHS. Residues 284-303 are compositionally biased toward basic and acidic residues; that stretch reads PDWHQWPDDLRDVSSPKESD. Phosphoserine is present on residues S297, S298, and S302. A compositionally biased stretch (basic residues) spans 328-343; it reads PRKRGRPPGARNKIKR.

It localises to the nucleus. Its function is as follows. Binds, preferentially, to the Maundrell ARS consensus sequence within ARS3002. In Schizosaccharomyces pombe (strain 972 / ATCC 24843) (Fission yeast), this protein is ARS-binding protein 2 (abp2).